The following is a 260-amino-acid chain: Triosephosphate isomerase (260 aa).

11–13 (NWK) contributes to the substrate binding site. Residue His-103 is the Electrophile of the active site. Glu-175 acts as the Proton acceptor in catalysis. Residues Gly-181, Ser-220, and 241-242 (GG) contribute to the substrate site.

Belongs to the triosephosphate isomerase family. As to quaternary structure, homodimer.

Its subcellular location is the cytoplasm. The catalysed reaction is D-glyceraldehyde 3-phosphate = dihydroxyacetone phosphate. It participates in carbohydrate biosynthesis; gluconeogenesis. The protein operates within carbohydrate degradation; glycolysis; D-glyceraldehyde 3-phosphate from glycerone phosphate: step 1/1. Its function is as follows. Involved in the gluconeogenesis. Catalyzes stereospecifically the conversion of dihydroxyacetone phosphate (DHAP) to D-glyceraldehyde-3-phosphate (G3P). The sequence is that of Triosephosphate isomerase from Shewanella sp. (strain MR-4).